Consider the following 269-residue polypeptide: Malonyl-[acyl-carrier protein] O-methyltransferase (269 aa).

It belongs to the methyltransferase superfamily.

The catalysed reaction is malonyl-[ACP] + S-adenosyl-L-methionine = malonyl-[ACP] methyl ester + S-adenosyl-L-homocysteine. The protein operates within cofactor biosynthesis; biotin biosynthesis. Functionally, converts the free carboxyl group of a malonyl-thioester to its methyl ester by transfer of a methyl group from S-adenosyl-L-methionine (SAM). It allows to synthesize pimeloyl-ACP via the fatty acid synthetic pathway. The protein is Malonyl-[acyl-carrier protein] O-methyltransferase of Bacillus cereus (strain ATCC 14579 / DSM 31 / CCUG 7414 / JCM 2152 / NBRC 15305 / NCIMB 9373 / NCTC 2599 / NRRL B-3711).